Here is a 480-residue protein sequence, read N- to C-terminus: Krueppel-like factor 10 (480 aa).

Positions 1–12 are enriched in polar residues; the sequence is MLNFGASLQQAS. Disordered stretches follow at residues 1–32, 64–83, and 97–146; these read MLNFGASLQQASEGKMELISEKSKEGAHPWDK, VTPVSDTSEEDSLLPGTPDL, and PSDF…APPL. The span at 14 to 32 shows a compositional bias: basic and acidic residues; sequence GKMELISEKSKEGAHPWDK. A Phosphoserine modification is found at Ser183. The tract at residues 202-222 is disordered; sequence AAVSPNRPKPEPSTAANGAEK. Position 249 is a phosphoserine (Ser249). C2H2-type zinc fingers lie at residues 369-393, 399-423, and 429-451; these read HICSHPGCGKTYFKSSHLKAHVRTH, FSCSWKGCERRFARSDELSRHRRTH, and FACPMCDRRFMRSDHLTKHARRH.

This sequence belongs to the Sp1 C2H2-type zinc-finger protein family. Post-translationally, ubiquitinated; mediated by SIAH1 and leading to its subsequent proteasomal degradation.

The protein localises to the nucleus. Transcriptional repressor which binds to the consensus sequence 5'-GGTGTG-3'. Regulates the circadian expression of genes involved in lipogenesis, gluconeogenesis, and glycolysis in the liver. Represses the expression of PCK2, a rate-limiting step enzyme of gluconeogenesis. May play a role in the cell cycle regulation. Plays a role in the regulation of the circadian clock; binds to the GC box sequence in the promoter of the core clock component ARTNL/BMAL1 and represses its transcriptional activity. The sequence is that of Krueppel-like factor 10 (Klf10) from Rattus norvegicus (Rat).